We begin with the raw amino-acid sequence, 328 residues long: RNA 3'-terminal phosphate cyclase (328 aa).

Residues Q100 and 276 to 280 contribute to the ATP site; that span reads HLADQ. Catalysis depends on H302, which acts as the Tele-AMP-histidine intermediate.

This sequence belongs to the RNA 3'-terminal cyclase family. Type 1 subfamily.

The protein localises to the cytoplasm. It carries out the reaction a 3'-end 3'-phospho-ribonucleotide-RNA + ATP = a 3'-end 2',3'-cyclophospho-ribonucleotide-RNA + AMP + diphosphate. Functionally, catalyzes the conversion of 3'-phosphate to a 2',3'-cyclic phosphodiester at the end of RNA. The mechanism of action of the enzyme occurs in 3 steps: (A) adenylation of the enzyme by ATP; (B) transfer of adenylate to an RNA-N3'P to produce RNA-N3'PP5'A; (C) and attack of the adjacent 2'-hydroxyl on the 3'-phosphorus in the diester linkage to produce the cyclic end product. The biological role of this enzyme is unknown but it is likely to function in some aspects of cellular RNA processing. This is RNA 3'-terminal phosphate cyclase (rtcA) from Archaeoglobus fulgidus (strain ATCC 49558 / DSM 4304 / JCM 9628 / NBRC 100126 / VC-16).